The following is a 377-amino-acid chain: MDFVNNLDTDTSLSILSCLDDPSDIVRASAVSRSWRQFVVKYSLSKNLCLKLFHQLSNVDHIIETSNDRNGESSEAGSSSLMDTRLLEKEHRAFALLARGCMSSPIESCIADAIRASSTDNYPVESILNTLEKRDRIGRTPSYWSSTGQHKTTVPESLLYKLIGDLCLITEVSIHPFQAYFQRGHPIYSSHYVRFRLGHEKDNSPHYNNSQDKKGEPGKSSIESNYVWTYTSQEFSMAQENRLQSFQLPEPVLCIGGYLLVEFLGRVQTQEMDGQYYICVSHVKVEGRSLAKSFRVENVDDNGKFGLKVLSYNDPKKMEEMDAEAGQDMDAEAGQSQLRNLEQLLNLLHRHPLDVVDYVWPDESDDEYAESEDEAEP.

In terms of domain architecture, F-box spans 7–47 (LDTDTSLSILSCLDDPSDIVRASAVSRSWRQFVVKYSLSKN).

This is F-box protein At4g00755 from Arabidopsis thaliana (Mouse-ear cress).